A 169-amino-acid polypeptide reads, in one-letter code: Crossover junction endodeoxyribonuclease RuvC (169 aa).

Active-site residues include Asp-11, Glu-71, and Asp-143. Asp-11, Glu-71, and Asp-143 together coordinate Mg(2+).

This sequence belongs to the RuvC family. Homodimer which binds Holliday junction (HJ) DNA. The HJ becomes 2-fold symmetrical on binding to RuvC with unstacked arms; it has a different conformation from HJ DNA in complex with RuvA. In the full resolvosome a probable DNA-RuvA(4)-RuvB(12)-RuvC(2) complex forms which resolves the HJ. Mg(2+) serves as cofactor.

It is found in the cytoplasm. It carries out the reaction Endonucleolytic cleavage at a junction such as a reciprocal single-stranded crossover between two homologous DNA duplexes (Holliday junction).. The RuvA-RuvB-RuvC complex processes Holliday junction (HJ) DNA during genetic recombination and DNA repair. Endonuclease that resolves HJ intermediates. Cleaves cruciform DNA by making single-stranded nicks across the HJ at symmetrical positions within the homologous arms, yielding a 5'-phosphate and a 3'-hydroxyl group; requires a central core of homology in the junction. The consensus cleavage sequence is 5'-(A/T)TT(C/G)-3'. Cleavage occurs on the 3'-side of the TT dinucleotide at the point of strand exchange. HJ branch migration catalyzed by RuvA-RuvB allows RuvC to scan DNA until it finds its consensus sequence, where it cleaves and resolves the cruciform DNA. This is Crossover junction endodeoxyribonuclease RuvC from Rhizobium johnstonii (strain DSM 114642 / LMG 32736 / 3841) (Rhizobium leguminosarum bv. viciae).